The primary structure comprises 1059 residues: Carbamoyl phosphate synthase large chain (1059 aa).

Residues Met-1 to Glu-401 are carboxyphosphate synthetic domain. Positions 129, 169, 175, 176, 208, 210, 215, 241, 242, 243, 284, and 298 each coordinate ATP. The region spanning Lys-133–Val-327 is the ATP-grasp 1 domain. 3 residues coordinate Mg(2+): Gln-284, Glu-298, and Asn-300. Residues Gln-284, Glu-298, and Asn-300 each contribute to the Mn(2+) site. An oligomerization domain region spans residues Ile-402–Ser-546. Positions Ile-547–Asn-929 are carbamoyl phosphate synthetic domain. One can recognise an ATP-grasp 2 domain in the interval Asp-671–Leu-861. ATP-binding residues include Arg-707, Ser-746, Leu-748, Glu-752, Gly-777, Val-778, His-779, Ser-780, Gln-820, and Glu-832. Mg(2+)-binding residues include Gln-820, Glu-832, and Asn-834. Gln-820, Glu-832, and Asn-834 together coordinate Mn(2+). An MGS-like domain is found at Ile-930–His-1059. An allosteric domain region spans residues Ile-930–His-1059.

This sequence belongs to the CarB family. As to quaternary structure, composed of two chains; the small (or glutamine) chain promotes the hydrolysis of glutamine to ammonia, which is used by the large (or ammonia) chain to synthesize carbamoyl phosphate. Tetramer of heterodimers (alpha,beta)4. Mg(2+) serves as cofactor. The cofactor is Mn(2+).

The enzyme catalyses hydrogencarbonate + L-glutamine + 2 ATP + H2O = carbamoyl phosphate + L-glutamate + 2 ADP + phosphate + 2 H(+). It catalyses the reaction hydrogencarbonate + NH4(+) + 2 ATP = carbamoyl phosphate + 2 ADP + phosphate + 2 H(+). Its pathway is amino-acid biosynthesis; L-arginine biosynthesis; carbamoyl phosphate from bicarbonate: step 1/1. It participates in pyrimidine metabolism; UMP biosynthesis via de novo pathway; (S)-dihydroorotate from bicarbonate: step 1/3. Large subunit of the glutamine-dependent carbamoyl phosphate synthetase (CPSase). CPSase catalyzes the formation of carbamoyl phosphate from the ammonia moiety of glutamine, carbonate, and phosphate donated by ATP, constituting the first step of 2 biosynthetic pathways, one leading to arginine and/or urea and the other to pyrimidine nucleotides. The large subunit (synthetase) binds the substrates ammonia (free or transferred from glutamine from the small subunit), hydrogencarbonate and ATP and carries out an ATP-coupled ligase reaction, activating hydrogencarbonate by forming carboxy phosphate which reacts with ammonia to form carbamoyl phosphate. This chain is Carbamoyl phosphate synthase large chain, found in Leuconostoc mesenteroides subsp. mesenteroides (strain ATCC 8293 / DSM 20343 / BCRC 11652 / CCM 1803 / JCM 6124 / NCDO 523 / NBRC 100496 / NCIMB 8023 / NCTC 12954 / NRRL B-1118 / 37Y).